We begin with the raw amino-acid sequence, 408 residues long: Lysosome-associated membrane glycoprotein 3 (408 aa).

Positions Met1–Gly20 are cleaved as a signal peptide. Topologically, residues Tyr21–Thr373 are lumenal. N-linked (GlcNAc...) asparagine glycosylation is found at Asn55 and Asn225. A disulfide bond links Cys230 and Cys267. The N-linked (GlcNAc...) asparagine glycan is linked to Asn284. An intrachain disulfide couples Cys331 to Cys368. The chain crosses the membrane as a helical span at residues Val374 to Tyr394. The Cytoplasmic portion of the chain corresponds to Lys395 to Ile408.

Belongs to the LAMP family. As to quaternary structure, monomer. Interacts with FURIN.

It is found in the cell surface. The protein localises to the lysosome membrane. It localises to the cytoplasmic vesicle membrane. Its subcellular location is the early endosome membrane. Its function is as follows. Lysosomal membrane glycoprotein which plays a role in the unfolded protein response (UPR) that contributes to protein degradation and cell survival during proteasomal dysfunction. Plays a role in the process of fusion of the lysosome with the autophagosome, thereby modulating the autophagic process. Promotes hepatocellular lipogenesis through activation of the PI3K/Akt pathway. May also play a role in dendritic cell function and in adaptive immunity. This chain is Lysosome-associated membrane glycoprotein 3 (Lamp3), found in Rattus norvegicus (Rat).